The chain runs to 534 residues: Cytidylyl-2-hydroxyethylphosphonate methyltransferase (534 aa).

The B12-binding domain maps to 38–195; that stretch reads KVLLLNPSAT…EHLNGNVSDD (158 aa). A Radical SAM core domain is found at 268 to 496; sequence TVGSRVGQLY…TYKQGIINVP (229 aa). Positions 282, 286, and 289 each coordinate [4Fe-4S] cluster.

This sequence belongs to the radical SAM superfamily. It depends on [4Fe-4S] cluster as a cofactor. The cofactor is methylcob(III)alamin.

It catalyses the reaction cytidine 5'-{[hydroxy(2-hydroxyethyl)phosphonoyl]phosphate} + AH2 + 2 S-adenosyl-L-methionine = cytidine 5'-({hydroxy[(S)-2-hydroxypropyl]phosphonoyl}phosphate) + 5'-deoxyadenosine + L-methionine + A + S-adenosyl-L-homocysteine + 2 H(+). It functions in the pathway antibiotic biosynthesis; fosfomycin biosynthesis. Involved in fosfomycin biosynthesis. Catalyzes the C-methylation of cytidylyl-2-hydroxyethylphosphonate (HEP-CMP) to form cytidylyl-2-hydroxypropylphosphonate (HPP-CMP). The C-methylation is not stereoselective and the ratio of (S)- to (R)-HPP-CMP is almost equal in vitro. In Streptomyces wedmorensis, this protein is Cytidylyl-2-hydroxyethylphosphonate methyltransferase.